Consider the following 660-residue polypeptide: Rhamnogalacturonate lyase B (660 aa).

Residues 1-18 (MRLGVCFSLAAAASVARA) form the signal peptide. N-linked (GlcNAc...) asparagine glycans are attached at residues N25, N109, N142, and N284. Positions 446–466 (RLGTPDKSSGEFRHGAARDPT) are disordered. A compositionally biased stretch (basic and acidic residues) spans 453–466 (SSGEFRHGAARDPT). N524, N566, and N635 each carry an N-linked (GlcNAc...) asparagine glycan.

The protein belongs to the polysaccharide lyase 4 family.

Its subcellular location is the secreted. The enzyme catalyses Endotype eliminative cleavage of L-alpha-rhamnopyranosyl-(1-&gt;4)-alpha-D-galactopyranosyluronic acid bonds of rhamnogalacturonan I domains in ramified hairy regions of pectin leaving L-rhamnopyranose at the reducing end and 4-deoxy-4,5-unsaturated D-galactopyranosyluronic acid at the non-reducing end.. In terms of biological role, pectinolytic enzymes consist of four classes of enzymes: pectin lyase, polygalacturonase, pectin methylesterase and rhamnogalacturonase. Degrades the rhamnogalacturonan I (RG-I) backbone of pectin. Active against linseed rhamnogalacturonan. The sequence is that of Rhamnogalacturonate lyase B (rglB) from Emericella nidulans (strain FGSC A4 / ATCC 38163 / CBS 112.46 / NRRL 194 / M139) (Aspergillus nidulans).